A 421-amino-acid chain; its full sequence is 4-hydroxy-3-methylbut-2-en-1-yl diphosphate synthase (flavodoxin) (421 aa).

Positions 298, 301, 344, and 351 each coordinate [4Fe-4S] cluster.

The protein belongs to the IspG family. It depends on [4Fe-4S] cluster as a cofactor.

It catalyses the reaction (2E)-4-hydroxy-3-methylbut-2-enyl diphosphate + oxidized [flavodoxin] + H2O + 2 H(+) = 2-C-methyl-D-erythritol 2,4-cyclic diphosphate + reduced [flavodoxin]. It functions in the pathway isoprenoid biosynthesis; isopentenyl diphosphate biosynthesis via DXP pathway; isopentenyl diphosphate from 1-deoxy-D-xylulose 5-phosphate: step 5/6. Functionally, converts 2C-methyl-D-erythritol 2,4-cyclodiphosphate (ME-2,4cPP) into 1-hydroxy-2-methyl-2-(E)-butenyl 4-diphosphate. This is 4-hydroxy-3-methylbut-2-en-1-yl diphosphate synthase (flavodoxin) from Neisseria meningitidis serogroup C / serotype 2a (strain ATCC 700532 / DSM 15464 / FAM18).